The primary structure comprises 88 residues: Small ribosomal subunit protein uS17 (88 aa).

It belongs to the universal ribosomal protein uS17 family. As to quaternary structure, part of the 30S ribosomal subunit.

Functionally, one of the primary rRNA binding proteins, it binds specifically to the 5'-end of 16S ribosomal RNA. The sequence is that of Small ribosomal subunit protein uS17 from Levilactobacillus brevis (strain ATCC 367 / BCRC 12310 / CIP 105137 / JCM 1170 / LMG 11437 / NCIMB 947 / NCTC 947) (Lactobacillus brevis).